A 66-amino-acid polypeptide reads, in one-letter code: Probable cytochrome b-c1 complex subunit 9 (66 aa).

The Mitochondrial matrix portion of the chain corresponds to 1 to 20 (MSNALTNIFYKYVARRNSTW). The helical transmembrane segment at 21–46 (MAGAILGAFVLDSTVSGAVNTFFDSV) threads the bilayer. Residues 47 to 66 (NKGKLWKDVYAERVKKGISQ) lie on the Mitochondrial intermembrane side of the membrane.

This sequence belongs to the UQCR10/QCR9 family. As to quaternary structure, component of the ubiquinol-cytochrome c oxidoreductase (cytochrome b-c1 complex, complex III, CIII), a multisubunit enzyme composed of 3 respiratory subunits cytochrome b, cytochrome c1 and Rieske protein, 2 core protein subunits, and additional low-molecular weight protein subunits. The complex exists as an obligatory dimer and forms supercomplexes (SCs) in the inner mitochondrial membrane with cytochrome c oxidase (complex IV, CIV).

Its subcellular location is the mitochondrion inner membrane. Its function is as follows. Component of the ubiquinol-cytochrome c oxidoreductase, a multisubunit transmembrane complex that is part of the mitochondrial electron transport chain which drives oxidative phosphorylation. The respiratory chain contains 3 multisubunit complexes succinate dehydrogenase (complex II, CII), ubiquinol-cytochrome c oxidoreductase (cytochrome b-c1 complex, complex III, CIII) and cytochrome c oxidase (complex IV, CIV), that cooperate to transfer electrons derived from NADH and succinate to molecular oxygen, creating an electrochemical gradient over the inner membrane that drives transmembrane transport and the ATP synthase. The cytochrome b-c1 complex catalyzes electron transfer from ubiquinol to cytochrome c, linking this redox reaction to translocation of protons across the mitochondrial inner membrane, with protons being carried across the membrane as hydrogens on the quinol. In the process called Q cycle, 2 protons are consumed from the matrix, 4 protons are released into the intermembrane space and 2 electrons are passed to cytochrome c. This Dictyostelium discoideum (Social amoeba) protein is Probable cytochrome b-c1 complex subunit 9.